A 172-amino-acid chain; its full sequence is C-phycocyanin subunit beta (172 aa).

Asparagine 72 is modified (N4-methylasparagine). Cysteine 82 and cysteine 153 together coordinate (2R,3E)-phycocyanobilin.

This sequence belongs to the phycobiliprotein family. Heterodimer of an alpha and a beta subunit, which further assembles into trimers and the trimers into hexamers. In terms of processing, contains two covalently linked bilin chromophores. The chromophore on position 82 is added by the phycocyanobilin lyase CpcUS, while the chromophore on position 153 is added by the phycocyanobilin lyase CpcT.

It is found in the cellular thylakoid membrane. Light-harvesting photosynthetic bile pigment-protein from the phycobiliprotein complex (phycobilisome, PBS). Phycocyanin is the major phycobiliprotein in the PBS rod. The chain is C-phycocyanin subunit beta (cpcB) from Picosynechococcus sp. (strain ATCC 27264 / PCC 7002 / PR-6) (Agmenellum quadruplicatum).